The primary structure comprises 372 residues: Fatty acid 2-hydroxylase (372 aa).

The region spanning 8–86 (AASFTPAEVQ…LEQYYVGELR (79 aa)) is the Cytochrome b5 heme-binding domain. Residues His-43 and His-69 each contribute to the heme site. Transmembrane regions (helical) follow at residues 168-188 (VWYS…WSYY) and 213-233 (SVFI…EYVI). Residues 219 to 361 (FVLGMLFWTF…TKLWDYFFHT (143 aa)) enclose the Fatty acid hydroxylase domain. Positions 234, 239, 257, 260, and 261 each coordinate Zn(2+). A run of 2 helical transmembrane segments spans residues 268–288 (SRLV…YVFL) and 290–310 (LILP…GYVL). Zn(2+) contacts are provided by His-315, His-319, His-336, His-339, and His-340.

The protein belongs to the sterol desaturase family. SCS7 subfamily. Zn(2+) is required as a cofactor. In terms of tissue distribution, expressed in brain (at protein level). Detected in cerebellum and forebrain. Expression in the white matter is mainly restricted in oligodendrocytes. Expressed in stomach, kidney, skin and testis. Expressed in sebaceous gland.

It is found in the endoplasmic reticulum membrane. Its subcellular location is the microsome membrane. The catalysed reaction is a 1,2-saturated fatty acid + 2 Fe(II)-[cytochrome b5] + O2 + 2 H(+) = a (R)-2-hydroxy fatty acid + 2 Fe(III)-[cytochrome b5] + H2O. It catalyses the reaction hexadecanoate + 2 Fe(II)-[cytochrome b5] + O2 + 2 H(+) = (R)-2-hydroxyhexadecanoate + 2 Fe(III)-[cytochrome b5] + H2O. The enzyme catalyses octadecanoate + 2 Fe(II)-[cytochrome b5] + O2 + 2 H(+) = (R)-2-hydroxyoctadecanoate + 2 Fe(III)-[cytochrome b5] + H2O. It carries out the reaction docosanoate + 2 Fe(II)-[cytochrome b5] + O2 + 2 H(+) = 2-hydroxydocosanoate + 2 Fe(III)-[cytochrome b5] + H2O. The catalysed reaction is tetracosanoate + 2 Fe(II)-[cytochrome b5] + O2 + 2 H(+) = (R)-2-hydroxytetracosanoate + 2 Fe(III)-[cytochrome b5] + H2O. It participates in sphingolipid metabolism; galactosylceramide biosynthesis. The protein operates within lipid metabolism; fatty acid metabolism. In terms of biological role, catalyzes the hydroxylation of free fatty acids at the C-2 position to produce 2-hydroxy fatty acids, which are building blocks of sphingolipids and glycosphingolipids common in neural tissue and epidermis. FA2H is stereospecific for the production of (R)-2-hydroxy fatty acids. Plays an essential role in the synthesis of galactosphingolipids of the myelin sheath. Responsible for the synthesis of sphingolipids and glycosphingolipids involved in the formation of epidermal lamellar bodies critical for skin permeability barrier. Participates in the synthesis of glycosphingolipids and a fraction of type II wax diesters in sebaceous gland, specifically regulating hair follicle homeostasis. Involved in the synthesis of sphingolipids of plasma membrane rafts, controlling lipid raft mobility and trafficking of raft-associated proteins. The protein is Fatty acid 2-hydroxylase of Mus musculus (Mouse).